The primary structure comprises 733 residues: Submandibular gland protein C (733 aa).

The signal sequence occupies residues 1 to 20 (MKLILLYLAVVLCFVGKARS). The disordered stretch occupies residues 48 to 91 (KSSGGSKDYNLSDGGKSNSRKNLSPATGGSATQQSNLDDSHAPN). Asn-57 carries N-linked (GlcNAc...) asparagine glycosylation. Residues 62–84 (GKSNSRKNLSPATGGSATQQSNL) are compositionally biased toward polar residues. 2 N-linked (GlcNAc...) asparagine glycosylation sites follow: Asn-141 and Asn-187. Disordered regions lie at residues 172 to 204 (GQQAAASGGSKHNVENSSLSTGSATSNKGADKP), 249 to 330 (LTED…NSSN), 369 to 450 (LTED…NSSN), and 496 to 733 (SVTE…PSVA). Residues 186–199 (ENSSLSTGSATSNK) show a composition bias toward polar residues. Positions 256–270 (TSTSASVSGDSSTSS) are enriched in low complexity. Positions 300-318 (GSKQNVEDSTLSTGSATSN) are enriched in polar residues. Asn-327 is a glycosylation site (N-linked (GlcNAc...) asparagine). Residues 376-390 (TSTSASVSGDSSTSS) show a composition bias toward low complexity. The segment covering 420–438 (GSKQNVEDSTLSTGSATSN) has biased composition (polar residues). Residues Asn-447, Asn-514, and Asn-528 are each glycosylated (N-linked (GlcNAc...) asparagine). Composition is skewed to polar residues over residues 496–516 (SVTEASQSAERPNAQSSNNLS) and 525–535 (NPTNGSSSASS). The segment covering 538 to 552 (KPYEEGMRKLLKFLE) has biased composition (basic and acidic residues). Composition is skewed to low complexity over residues 563-574 (SVSGMSSESSRS) and 609-619 (SSNSSTGSATS). The N-linked (GlcNAc...) asparagine glycan is linked to Asn-611. A compositionally biased stretch (gly residues) spans 654–665 (GFNGPEGVGENN). The span at 677-701 (GSKSDSGSHNLSSGSGSRSNVSTGG) shows a compositional bias: low complexity. 2 N-linked (GlcNAc...) asparagine glycosylation sites follow: Asn-686 and Asn-696. Residues 722 to 733 (TGKTQSGSPSVA) show a composition bias toward polar residues.

In terms of processing, N-glycosylated. As to expression, detected in terminal tubule cells of the submandibular gland (at protein level). Expressed in submandibular salivary glands of 3-day-old males but not adults. Expression in adult submandibular glands is restricted to females. Isoform 5 is expressed in both 3-day-old and adult sublingual glands.

It localises to the secreted. The polypeptide is Submandibular gland protein C (Muc19) (Mus musculus (Mouse)).